A 372-amino-acid polypeptide reads, in one-letter code: Envelope phospholipase OPG057 (372 aa).

The short motif at 153–156 (YPPL) is the YPPL element. Residues Cys185 and Cys186 are each lipidated (S-palmitoyl cysteine; by host). Residues 307–334 (FTIQNNTKLLIVDDEYVHITSANFDGTH) enclose the PLD phosphodiesterase domain.

This sequence belongs to the orthopoxvirus OPG057 family. As to quaternary structure, interacts with protein OPG190. Post-translationally, palmitoylated. Attachment of the palmitate moiety is essential for correct intracellular targeting and protein function.

Its subcellular location is the virion membrane. It localises to the host Golgi apparatus. The protein localises to the host trans-Golgi network. The protein resides in the host endoplasmic reticulum membrane. The enzyme catalyses a 1,2-diacyl-sn-glycero-3-phosphocholine + H2O = a 1,2-diacyl-sn-glycero-3-phosphate + choline + H(+). Major envelope protein that plays a role in the biogenesis of the viral double membrane and in egress of virus from the host cell. Produces the wrapped form of virus that is required for cell-to-cell spread. Acts as a lipase with broad specificity including phospholipase C, phospholipase A, and triacylglycerol lipase activities. The chain is Envelope phospholipase OPG057 (OPG057) from Homo sapiens (Human).